The chain runs to 237 residues: Orotidine 5'-phosphate decarboxylase (237 aa).

Substrate is bound by residues D10, K32, 59–68 (DLKLHDIPNT), T118, R180, Q189, G209, and R210. The active-site Proton donor is the K61.

It belongs to the OMP decarboxylase family. Type 1 subfamily. As to quaternary structure, homodimer.

It carries out the reaction orotidine 5'-phosphate + H(+) = UMP + CO2. The protein operates within pyrimidine metabolism; UMP biosynthesis via de novo pathway; UMP from orotate: step 2/2. In terms of biological role, catalyzes the decarboxylation of orotidine 5'-monophosphate (OMP) to uridine 5'-monophosphate (UMP). The protein is Orotidine 5'-phosphate decarboxylase of Fusobacterium nucleatum subsp. nucleatum (strain ATCC 25586 / DSM 15643 / BCRC 10681 / CIP 101130 / JCM 8532 / KCTC 2640 / LMG 13131 / VPI 4355).